The sequence spans 129 residues: Small ribosomal subunit protein uS9 (129 aa).

A disordered region spans residues 107–129 (SRVVERKKPGKKKARRSPQFSKR). A compositionally biased stretch (basic residues) spans 114–129 (KPGKKKARRSPQFSKR).

This sequence belongs to the universal ribosomal protein uS9 family.

The sequence is that of Small ribosomal subunit protein uS9 from Sulfurovum sp. (strain NBC37-1).